A 245-amino-acid chain; its full sequence is Probable septum site-determining protein MinC (245 aa).

A compositionally biased stretch (basic and acidic residues) spans 112–132; sequence ARERPLESAEPVAPKKPEKPP. Residues 112–140 form a disordered region; that stretch reads ARERPLESAEPVAPKKPEKPPEPTVKPTR.

Belongs to the MinC family. Interacts with MinD and FtsZ.

Its function is as follows. Cell division inhibitor that blocks the formation of polar Z ring septums. Rapidly oscillates between the poles of the cell to destabilize FtsZ filaments that have formed before they mature into polar Z rings. Prevents FtsZ polymerization. The protein is Probable septum site-determining protein MinC of Pseudomonas fluorescens (strain Pf0-1).